Consider the following 55-residue polypeptide: Rubredoxin-1 (55 aa).

In terms of domain architecture, Rubredoxin-like spans 1–54 (MKKWQCVVCGLIYDEAKGWPEEGIEAGTRWEDVPEDWLCPDCGVGKLDFEMIEI). Positions 6, 9, 39, and 42 each coordinate Fe cation.

Belongs to the rubredoxin family. It depends on Fe(3+) as a cofactor.

The protein resides in the cytoplasm. It functions in the pathway hydrocarbon metabolism; alkane degradation. Functionally, involved in the hydrocarbon hydroxylating system, which transfers electrons from NADH to rubredoxin reductase and then through rubredoxin to alkane 1 monooxygenase. In Pseudomonas aeruginosa (strain ATCC 15692 / DSM 22644 / CIP 104116 / JCM 14847 / LMG 12228 / 1C / PRS 101 / PAO1), this protein is Rubredoxin-1 (rubA1).